The following is a 257-amino-acid chain: Hydroxyacylglutathione hydrolase (257 aa).

Positions 55, 57, 59, 60, 112, 129, and 167 each coordinate Zn(2+).

It belongs to the metallo-beta-lactamase superfamily. Glyoxalase II family. In terms of assembly, monomer. The cofactor is Zn(2+).

It catalyses the reaction an S-(2-hydroxyacyl)glutathione + H2O = a 2-hydroxy carboxylate + glutathione + H(+). The protein operates within secondary metabolite metabolism; methylglyoxal degradation; (R)-lactate from methylglyoxal: step 2/2. Functionally, thiolesterase that catalyzes the hydrolysis of S-D-lactoyl-glutathione to form glutathione and D-lactic acid. The sequence is that of Hydroxyacylglutathione hydrolase from Pseudoalteromonas translucida (strain TAC 125).